The primary structure comprises 103 residues: Small ribosomal subunit protein uS10 (103 aa).

This sequence belongs to the universal ribosomal protein uS10 family. In terms of assembly, part of the 30S ribosomal subunit.

Functionally, involved in the binding of tRNA to the ribosomes. In Cellvibrio japonicus (strain Ueda107) (Pseudomonas fluorescens subsp. cellulosa), this protein is Small ribosomal subunit protein uS10.